The following is a 113-amino-acid chain: Gas vesicle protein I2 (113 aa).

The tract at residues 1 to 93 is disordered; sequence MTPTNRHTHG…TVPEQPTHAT (93 aa). The segment covering 11–22 has biased composition (low complexity); sequence QNAQHARRNAQQ. Residues 52 to 63 show a composition bias toward polar residues; sequence EQPTSDTTNPAA. Positions 69-81 are enriched in low complexity; it reads AQRTNAQNAARNA. Residues 82 to 93 show a composition bias toward polar residues; the sequence is HSTVPEQPTHAT.

Belongs to the gas vesicle GvpI family. As to quaternary structure, gvpF to GvpM interact with each other in vitro, and may form multi-subunit complex(es). Interacts with GvpC and GvpO.

It is found in the gas vesicle. Proteins GvpF to GvpM might be involved in nucleating gas vesicle formation. A minor component of the gas vesicle. Gas vesicles are hollow, gas filled proteinaceous nanostructures found in several microbial planktonic microorganisms. They allow positioning of halobacteria at the optimal depth for growth in the poorly aerated, shallow brine pools of their habitat. Its function is as follows. Expression of 2 c-vac DNA fragments containing 2 divergently transcribed regions (gvpE-gvpF-gvpG-gvpH-gvpI-gvpJ-gvpK-gvpL-gvpM and gvpA-gvpC-gvpN-gvpO) allows H.volcanii to produce gas vesicles. This is Gas vesicle protein I2 from Halobacterium salinarum (strain ATCC 700922 / JCM 11081 / NRC-1) (Halobacterium halobium).